The primary structure comprises 249 residues: 2,3-bisphosphoglycerate-dependent phosphoglycerate mutase (249 aa).

Substrate-binding positions include 8–15 (RHGQSVWN), 21–22 (TG), arginine 60, 87–90 (ERHY), lysine 98, 114–115 (RR), and 183–184 (GN). The active-site Tele-phosphohistidine intermediate is histidine 9. Glutamate 87 (proton donor/acceptor) is an active-site residue.

Belongs to the phosphoglycerate mutase family. BPG-dependent PGAM subfamily. As to quaternary structure, homodimer.

It catalyses the reaction (2R)-2-phosphoglycerate = (2R)-3-phosphoglycerate. The protein operates within carbohydrate degradation; glycolysis; pyruvate from D-glyceraldehyde 3-phosphate: step 3/5. In terms of biological role, catalyzes the interconversion of 2-phosphoglycerate and 3-phosphoglycerate. The sequence is that of 2,3-bisphosphoglycerate-dependent phosphoglycerate mutase from Solidesulfovibrio magneticus (strain ATCC 700980 / DSM 13731 / RS-1) (Desulfovibrio magneticus).